The sequence spans 117 residues: V-type sodium ATPase subunit F (117 aa).

Residues 1–20 (MARILTRIKEAEENNQKKEE) form a disordered region. The span at 7 to 20 (RIKEAEENNQKKEE) shows a compositional bias: basic and acidic residues.

It belongs to the V-ATPase G subunit family.

In terms of biological role, involved in ATP-driven sodium extrusion. The polypeptide is V-type sodium ATPase subunit F (ntpF) (Enterococcus hirae (strain ATCC 9790 / DSM 20160 / JCM 8729 / LMG 6399 / NBRC 3181 / NCIMB 6459 / NCDO 1258 / NCTC 12367 / WDCM 00089 / R)).